Here is a 516-residue protein sequence, read N- to C-terminus: tRNA-guanine(15) transglycosylase (516 aa).

The active-site Nucleophile is the Asp93. The substrate site is built by Asp128 and Ala196. Zn(2+) contacts are provided by Cys279, Cys281, and Cys284. Low complexity predominate over residues 488–502 (LSAVSERLGDEASVG). Positions 488–516 (LSAVSERLGDEASVGGDDGDDGGSASSAE) are disordered.

It belongs to the archaeosine tRNA-ribosyltransferase family. Zn(2+) serves as cofactor.

The catalysed reaction is guanosine(15) in tRNA + 7-cyano-7-deazaguanine = 7-cyano-7-carbaguanosine(15) in tRNA + guanine. The protein operates within tRNA modification; archaeosine-tRNA biosynthesis. In terms of biological role, exchanges the guanine residue with 7-cyano-7-deazaguanine (preQ0) at position 15 in the dihydrouridine loop (D-loop) of archaeal tRNAs. This is tRNA-guanine(15) transglycosylase from Haloferax volcanii (strain ATCC 29605 / DSM 3757 / JCM 8879 / NBRC 14742 / NCIMB 2012 / VKM B-1768 / DS2) (Halobacterium volcanii).